Consider the following 334-residue polypeptide: Hemin transport system permease protein HmuU (334 aa).

Helical transmembrane passes span 9-29 (LMLGFLLILLVILALGSANMG), 60-80 (LLAVVVGCALAVSGTIMQGLF), 96-116 (AALCVGLIIVMPFSLPPLLAL), 117-137 (YSHMVGAFIGSLAISTIIFTL), 149-169 (LLAGIAINALCGAAVGVLTYI), 191-211 (WSTLLVASSLILPTCILGLLQ), 244-264 (AILIGAAVAVSGVIGFIGLVV), 278-298 (WLLPGAALGGACLLLTADTLA), and 306-326 (EMPVGLLTSLLGGPYFLWLIL).

It belongs to the binding-protein-dependent transport system permease family. FecCD subfamily.

The protein localises to the cell inner membrane. Its function is as follows. Part of the binding-protein-dependent transport system for hemin; probably responsible for the translocation of the substrate across the membrane. The chain is Hemin transport system permease protein HmuU (hmuU) from Yersinia pestis.